The primary structure comprises 257 residues: MANTRVIELFDEFTDLIRDFIVRHEITTPEYETIMQYMISVGEAGEWPLWLDAFFETTVDSVSYGKGNWTSSAIQGPFFKEGAPLLTGKPATLPMRADEPGDRMRFTGSVRDTSGTPITGAVIDVWHSTNDGNYSFFSPALPDQYLLRGRVVPAEDGSIEFHSIRPVPYEIPKAGPTGQLMNSYLGRHSWRPAHIHIRITADGYRPLITQLYFEGDPYLDSDSCSAVKSELVLPVNKIDIDGETWQLVDFNFILQHN.

Residues Tyr134, Tyr169, His194, and His196 each contribute to the Fe cation site.

It belongs to the intradiol ring-cleavage dioxygenase family. Fe(3+) is required as a cofactor.

The catalysed reaction is 4-chlorocatechol + O2 = 3-chloro-cis,cis-muconate + 2 H(+). It carries out the reaction 3,5-dichlorocatechol + O2 = (2E,4E)-2,4-dichloromuconate + 2 H(+). This is Chlorocatechol 1,2-dioxygenase (clcA) from Rhodococcus opacus (Nocardia opaca).